We begin with the raw amino-acid sequence, 385 residues long: Circadian-associated transcriptional repressor (385 aa).

The span at 1-26 (MDSPSSVSSYSSYSLSSSFPTSPVNS) shows a compositional bias: low complexity. 3 disordered regions span residues 1–108 (MDSP…SLNT), 203–233 (GGGK…EKMD), and 365–385 (GHRE…LLNL). A compositionally biased stretch (basic and acidic residues) spans 33-45 (DSEREDKGAHGPR). The span at 70 to 79 (VSGNQHTPSH) shows a compositional bias: polar residues.

As to quaternary structure, interacts with PER2, CRY2, BHLHE41, HDAC1 and NR3C1. Interacts with BMAL1.

Its subcellular location is the nucleus. The protein localises to the PML body. Transcriptional repressor which forms a negative regulatory component of the circadian clock and acts independently of the circadian transcriptional repressors: CRY1, CRY2 and BHLHE41. In a histone deacetylase-dependent manner represses the transcriptional activator activity of the CLOCK-BMAL1 heterodimer. Abrogates the interaction of BMAL1 with the transcriptional coactivator CREBBP and can repress the histone acetyl-transferase activity of the CLOCK-BMAL1 heterodimer, reducing histone acetylation of its target genes. Rhythmically binds the E-box elements (5'-CACGTG-3') on circadian gene promoters and its occupancy shows circadian oscillation antiphasic to BMAL1. Interacts with the glucocorticoid receptor (NR3C1) and contributes to the repressive function in the glucocorticoid response. The sequence is that of Circadian-associated transcriptional repressor (CIART) from Homo sapiens (Human).